The chain runs to 198 residues: MAEKENTKRNRREEILQALAQMLESSDGSQRITTAKLAANVGVSEAALYRHFPSKTRMFDSLIEFIEDTLTSRINLILQDEKDTFHRLRLILLLILGFAERNPGLTRIMTGHALMFEQDRLQGRINQLFERIEAQLRQVLKERRLREGSGFDHDETLLASQLLAFCEGMLSRFVRSEFRYRPTQEFETRWPLLACQLQ.

Residues 9–70 (RNRREEILQA…SLIEFIEDTL (62 aa)) enclose the HTH tetR-type domain. The H-T-H motif DNA-binding region spans 33–52 (TTAKLAANVGVSEAALYRHF). The stretch at 117–144 (EQDRLQGRINQLFERIEAQLRQVLKERR) forms a coiled coil.

Belongs to the nucleoid occlusion factor SlmA family. Homodimer. Interacts with FtsZ.

It is found in the cytoplasm. It localises to the nucleoid. Functionally, required for nucleoid occlusion (NO) phenomenon, which prevents Z-ring formation and cell division over the nucleoid. Acts as a DNA-associated cell division inhibitor that binds simultaneously chromosomal DNA and FtsZ, and disrupts the assembly of FtsZ polymers. SlmA-DNA-binding sequences (SBS) are dispersed on non-Ter regions of the chromosome, preventing FtsZ polymerization at these regions. In Edwardsiella ictaluri (strain 93-146), this protein is Nucleoid occlusion factor SlmA.